Reading from the N-terminus, the 236-residue chain is MGQKINPIGLRLGVNQTWSSRWYADSGEYGRLLHEDLKIRSYVMEELKQAAISKVIIERPHKKCRVTIHSARPGLIIGKKGADIEKLRHQLSEMTNAETSLNIVEIRKPEIDATIIAQSVAQQLERRVAFRRAMKRAVQSAMRLGAEGIRINCSGRLGGAEIARMEWYREGRVPLHTLRADVDYSTAEARTAYGVCGVKVWVFKGEILEHDPMASEHRATRNDNSSSSLNRRRESV.

Positions 39-107 (IRSYVMEELK…ETSLNIVEIR (69 aa)) constitute a KH type-2 domain. The tract at residues 214-236 (ASEHRATRNDNSSSSLNRRRESV) is disordered.

Belongs to the universal ribosomal protein uS3 family. In terms of assembly, part of the 30S ribosomal subunit. Forms a tight complex with proteins S10 and S14.

Its function is as follows. Binds the lower part of the 30S subunit head. Binds mRNA in the 70S ribosome, positioning it for translation. This chain is Small ribosomal subunit protein uS3, found in Bartonella bacilliformis (strain ATCC 35685 / KC583 / Herrer 020/F12,63).